Here is a 306-residue protein sequence, read N- to C-terminus: MTEKVAVLLGGTSAEREVSLLSGQAVLAGLKEAGINAHAVDTRDVSVTTLKEEGFTKIFIALHGRGGEDGTLQGVLEFLGLPYTGSGVMASALTMDKLRTKQVWQAVGLPVSPYVALDRRQYSEMAANALLATFTHLGLPLIVKPSREGSSVGMSKVNTLSELPAALEEAFRHDDDILVEKWLSGPEYTVAILGDEVLPSIRIQPAGTFYDYEAKYLSDDTQYFCPSGLSDEKEQELAGLAMAAYRAVGCSGWGRVDFMLDSDGAFYLLEVNTSPGMTSHSLVPMAAHQRGLTFSQLVVKILELAG.

Residues 101-303 form the ATP-grasp domain; sequence KQVWQAVGLP…FSQLVVKILE (203 aa). 134–189 is a binding site for ATP; it reads FTHLGLPLIVKPSREGSSVGMSKVNTLSELPAALEEAFRHDDDILVEKWLSGPEYT. Mg(2+) contacts are provided by D257, E270, and N272.

The protein belongs to the D-alanine--D-alanine ligase family. Mg(2+) serves as cofactor. Requires Mn(2+) as cofactor.

It is found in the cytoplasm. The enzyme catalyses 2 D-alanine + ATP = D-alanyl-D-alanine + ADP + phosphate + H(+). It participates in cell wall biogenesis; peptidoglycan biosynthesis. Functionally, cell wall formation. This chain is D-alanine--D-alanine ligase, found in Pectobacterium carotovorum subsp. carotovorum (strain PC1).